The following is a 286-amino-acid chain: Polyamine aminopropyltransferase (286 aa).

A PABS domain is found at 5 to 238; sequence PLWHETLHDH…GIMTFAWASD (234 aa). Glutamine 33 is an S-methyl-5'-thioadenosine binding site. 2 residues coordinate spermidine: histidine 64 and aspartate 88. S-methyl-5'-thioadenosine contacts are provided by residues glutamate 108 and 140-141; that span reads DG. Aspartate 158 (proton acceptor) is an active-site residue. Residue 158–161 participates in spermidine binding; the sequence is DCTD. Position 165 (proline 165) interacts with S-methyl-5'-thioadenosine.

Belongs to the spermidine/spermine synthase family. Homodimer or homotetramer.

The protein resides in the cytoplasm. The enzyme catalyses S-adenosyl 3-(methylsulfanyl)propylamine + putrescine = S-methyl-5'-thioadenosine + spermidine + H(+). It functions in the pathway amine and polyamine biosynthesis; spermidine biosynthesis; spermidine from putrescine: step 1/1. Catalyzes the irreversible transfer of a propylamine group from the amino donor S-adenosylmethioninamine (decarboxy-AdoMet) to putrescine (1,4-diaminobutane) to yield spermidine. In Klebsiella pneumoniae (strain 342), this protein is Polyamine aminopropyltransferase.